We begin with the raw amino-acid sequence, 360 residues long: Phospho-N-acetylmuramoyl-pentapeptide-transferase (360 aa).

Transmembrane regions (helical) follow at residues G27–L47, G70–W90, V98–L118, L134–A154, T168–G188, G199–V219, L239–P259, I263–A283, I288–V308, and Q337–L357.

This sequence belongs to the glycosyltransferase 4 family. MraY subfamily. The cofactor is Mg(2+).

Its subcellular location is the cell inner membrane. The catalysed reaction is UDP-N-acetyl-alpha-D-muramoyl-L-alanyl-gamma-D-glutamyl-meso-2,6-diaminopimeloyl-D-alanyl-D-alanine + di-trans,octa-cis-undecaprenyl phosphate = di-trans,octa-cis-undecaprenyl diphospho-N-acetyl-alpha-D-muramoyl-L-alanyl-D-glutamyl-meso-2,6-diaminopimeloyl-D-alanyl-D-alanine + UMP. It functions in the pathway cell wall biogenesis; peptidoglycan biosynthesis. Functionally, catalyzes the initial step of the lipid cycle reactions in the biosynthesis of the cell wall peptidoglycan: transfers peptidoglycan precursor phospho-MurNAc-pentapeptide from UDP-MurNAc-pentapeptide onto the lipid carrier undecaprenyl phosphate, yielding undecaprenyl-pyrophosphoryl-MurNAc-pentapeptide, known as lipid I. In Methylorubrum extorquens (strain CM4 / NCIMB 13688) (Methylobacterium extorquens), this protein is Phospho-N-acetylmuramoyl-pentapeptide-transferase.